The following is a 530-amino-acid chain: 5-aminolevulinate synthase, mitochondrial (530 aa).

The transit peptide at 1–26 (MFRPVLKVRPSFSYPYSIVSSRSVRL) directs the protein to the mitochondrion. Substrate is bound by residues Arg73, Ser186, and Lys205. The pyridoxal 5'-phosphate site is built by Ser238, His266, and Thr316. Residue Lys319 is part of the active site. At Lys319 the chain carries N6-(pyridoxal phosphate)lysine. Pyridoxal 5'-phosphate is bound by residues Thr348 and Thr349. Thr434 contributes to the substrate binding site.

The protein belongs to the class-II pyridoxal-phosphate-dependent aminotransferase family. Homodimer. The cofactor is pyridoxal 5'-phosphate.

It is found in the mitochondrion matrix. It carries out the reaction succinyl-CoA + glycine + H(+) = 5-aminolevulinate + CO2 + CoA. The protein operates within porphyrin-containing compound metabolism; protoporphyrin-IX biosynthesis; 5-aminolevulinate from glycine: step 1/1. In terms of biological role, catalyzes the synthesis of 5-aminolevulinate (ALA) from succinyl-CoA and glycine, the first and rate-limiting step in heme biosynthesis. In Candida glabrata (strain ATCC 2001 / BCRC 20586 / JCM 3761 / NBRC 0622 / NRRL Y-65 / CBS 138) (Yeast), this protein is 5-aminolevulinate synthase, mitochondrial (HEM1).